The primary structure comprises 253 residues: Bridging integrator 3 (253 aa).

The BAR domain occupies 9–232 (GQPKKQIVSK…LDQPGHSDEQ (224 aa)). 2 coiled-coil regions span residues 16–57 (VSKT…AMSK) and 120–151 (SLNMAVKRREQALQDYGRLQAKVEKYEEKEKT). A disordered region spans residues 222–241 (QLDQPGHSDEQRERENETKL). Positions 227-241 (GHSDEQRERENETKL) are enriched in basic and acidic residues.

It localises to the cytoplasm. Its subcellular location is the cytoskeleton. Functionally, involved in cytokinesis and septation where it has a role in the localization of F-actin. The polypeptide is Bridging integrator 3 (Bin3) (Mus musculus (Mouse)).